Here is a 609-residue protein sequence, read N- to C-terminus: Membrane-bound O-acyltransferase GUP2 (609 aa).

Residues 1-18 (MSMLRIWSCIVHFFSVQA) form the signal peptide. Residues 19-75 (LDSRIKPDIEFKRRQRIFINSSKEENGSSSSAVTVTRNPVLSSNSPSPPLWNTWEFR) are Lumenal-facing. A helical membrane pass occupies residues 76 to 96 (LYYLAFTVVVPFMIKAALATS). Residues 97-133 (SESNPNYYKFSGLLAHGWILGRKVDNSDPQYRFFRSN) lie on the Cytoplasmic side of the membrane. Residues 134-154 (FFLLAILILLQIILKKVFVKF) form a helical membrane-spanning segment. Topologically, residues 155 to 169 (SKIPKTKFDFACGLV) are lumenal. A helical membrane pass occupies residues 170 to 190 (FVCFMYGINSVKLFTHAFIFF). Residues 191–200 (TLAHSLKRKR) lie on the Cytoplasmic side of the membrane. The helical transmembrane segment at 201–221 (LIAAFAIWSYGIFTLFINQKM) threads the bilayer. The Lumenal segment spans residues 222 to 324 (KNLPFNNIAI…VAEHHIQDYN (103 aa)). Residues 325–345 (FINFIAYITYAPLFLVGPIIT) traverse the membrane as a helical segment. Residues 346–371 (FNDYLYQSENKLPSLTKKNIGFYALK) are Cytoplasmic-facing. A helical transmembrane segment spans residues 372-392 (VFSSLLLMEIILHYIYVGAIA). Over 393–406 (RTKAWNNDTPLQQA) the chain is Lumenal. Residues 407 to 427 (MIALFNLNIMYLKLLIPWRLF) traverse the membrane as a helical segment. Topologically, residues 428-474 (RLWAMVDGIDAPENMLRCVDNNYSTVGFWRAWHTSFNKWVIRYIYVP) are cytoplasmic. A helical membrane pass occupies residues 475–495 (FGGSNNKILTSFAVFSFVAIW). Histidine 496 is an active-site residue. Topologically, residues 496-502 (HDIQLRV) are lumenal. A helical membrane pass occupies residues 503–523 (LFWGWLTVLLLLGETYITNCF). Over 524-533 (SRYRFRSWYR) the chain is Cytoplasmic. The chain crosses the membrane as a helical span at residues 534-554 (FVCGIGAAINICMMMIINVYG). At 555–575 (FCLGAEGTKLLLKGIFNNSHS) the chain is on the lumenal side. A helical transmembrane segment spans residues 576-596 (PEFLTAVMVSLFIAVQVMFEI). Topologically, residues 597–609 (REEEKRHGINLKC) are cytoplasmic.

It belongs to the membrane-bound acyltransferase family.

The protein resides in the endoplasmic reticulum membrane. In terms of biological role, probable membrane-bound O-acyltransferase. Together with GUP1, has an influence on the chemical composition of the yeast extracellular matrix (yECM) in yeast multicellular aggregates, such as biofilms and colonies. The sequence is that of Membrane-bound O-acyltransferase GUP2 (GUP2) from Saccharomyces cerevisiae (strain ATCC 204508 / S288c) (Baker's yeast).